The sequence spans 627 residues: Zinc cluster transcription factor acuM (627 aa).

Disordered stretches follow at residues 1–40 (MGCR…PARP), 129–148 (NGTA…GTME), 155–193 (AEGD…RRKV), 225–258 (CHDE…FSNA), 277–305 (PDGT…QNSL), and 394–416 (AQPS…PSST). Polar residues predominate over residues 162 to 171 (MESGSKNTAS). A DNA-binding region (zn(2)-C6 fungal-type) is located at residues 197–225 (CVYCRRSHMTCDSERPCTRCIKRNIGHLC). Basic and acidic residues predominate over residues 225-251 (CHDEPREPSKRARSEHEHSTAEEDGHS). Residues 286–305 (SSVSAVQHNTIPSSSAQNSL) show a composition bias toward polar residues. Residues 394–403 (AQPSQPTQSQ) are compositionally biased toward low complexity. A compositionally biased stretch (polar residues) spans 404-416 (PHQNDSVQGPSST).

It localises to the nucleus. Its function is as follows. Transcription factor that governs genes involved in reductive and siderophore-mediated iron acquisition, and carbon metabolism. Suppresses the expression of sreA and induces hapX to stimulate expression of genes involved in both reductive iron assimilation and siderophore-mediated iron uptake which is essential for the maximal virulence. Also regulates genes involved in gluconeogenesis. The protein is Zinc cluster transcription factor acuM of Aspergillus fumigatus (strain ATCC MYA-4609 / CBS 101355 / FGSC A1100 / Af293) (Neosartorya fumigata).